We begin with the raw amino-acid sequence, 164 residues long: Putative protein ZNF321 (164 aa).

The polypeptide is Putative protein ZNF321 (ZNF321P) (Homo sapiens (Human)).